Here is a 102-residue protein sequence, read N- to C-terminus: PSSSQALSVPSLSSEKKTASPTCVKTPSFRRCGKTGKYGRAEAKKTHHRHHTLMSTTCRCWSSSIVLYEHLDARVTDDGKTSRRRRCSLGRYALWIYNIYSS.

Residues 1-13 (PSSSQALSVPSLS) are compositionally biased toward low complexity. Residues 1–24 (PSSSQALSVPSLSSEKKTASPTCV) are disordered.

This is an uncharacterized protein from Human cytomegalovirus (strain AD169) (HHV-5).